The following is a 279-amino-acid chain: 3-methyl-2-oxobutanoate hydroxymethyltransferase (279 aa).

Residues D43 and D82 each contribute to the Mg(2+) site. 3-methyl-2-oxobutanoate is bound by residues 43–44, D82, and K112; that span reads DS. E114 is a Mg(2+) binding site. Catalysis depends on E181, which acts as the Proton acceptor.

This sequence belongs to the PanB family. In terms of assembly, homodecamer; pentamer of dimers. It depends on Mg(2+) as a cofactor.

The protein localises to the cytoplasm. The enzyme catalyses 3-methyl-2-oxobutanoate + (6R)-5,10-methylene-5,6,7,8-tetrahydrofolate + H2O = 2-dehydropantoate + (6S)-5,6,7,8-tetrahydrofolate. It participates in cofactor biosynthesis; (R)-pantothenate biosynthesis; (R)-pantoate from 3-methyl-2-oxobutanoate: step 1/2. Catalyzes the reversible reaction in which hydroxymethyl group from 5,10-methylenetetrahydrofolate is transferred onto alpha-ketoisovalerate to form ketopantoate. This Exiguobacterium sibiricum (strain DSM 17290 / CCUG 55495 / CIP 109462 / JCM 13490 / 255-15) protein is 3-methyl-2-oxobutanoate hydroxymethyltransferase.